Consider the following 445-residue polypeptide: Probable phosphoglucosamine mutase (445 aa).

Residue Ser99 is the Phosphoserine intermediate of the active site. Ser99, Asp238, Asp240, and Asp242 together coordinate Mg(2+). At Ser99 the chain carries Phosphoserine.

The protein belongs to the phosphohexose mutase family. Mg(2+) is required as a cofactor. Activated by phosphorylation.

It catalyses the reaction alpha-D-glucosamine 1-phosphate = D-glucosamine 6-phosphate. Functionally, catalyzes the conversion of glucosamine-6-phosphate to glucosamine-1-phosphate. This chain is Probable phosphoglucosamine mutase, found in Methanobrevibacter smithii (strain ATCC 35061 / DSM 861 / OCM 144 / PS).